The sequence spans 127 residues: MASIDELVEEIGKLTLTEASELVKALEEKFGVSAAPVMVAGGAMPGAAGAAEAPAEEKTEFDVVLKSAGASKINVIKVVRAATGLGLKEAKAVVDEAPSTVKEAMPKADAEKLVKELKEAGAEAEMK.

This sequence belongs to the bacterial ribosomal protein bL12 family. In terms of assembly, homodimer. Part of the ribosomal stalk of the 50S ribosomal subunit. Forms a multimeric L10(L12)X complex, where L10 forms an elongated spine to which 2 to 4 L12 dimers bind in a sequential fashion. Binds GTP-bound translation factors.

Forms part of the ribosomal stalk which helps the ribosome interact with GTP-bound translation factors. Is thus essential for accurate translation. The sequence is that of Large ribosomal subunit protein bL12 from Chloroherpeton thalassium (strain ATCC 35110 / GB-78).